Reading from the N-terminus, the 444-residue chain is MRNIIYFILLLLFSFKGYALETINIEHGQAAPTPIAVNKFNIDSSADYVLGNDVVKVISNDLKLSGVFCPISSASFIEERTGIEYKPLFAAWRQINASLLVNGEIKKLESGKLKISFILWDTLLEKQLAGEILEVPENLWRRAAHKIADKIYEKITGDAGYFDTKIVYVSESTSLPKIKRIALMDYDGANNKYLTNGRSLVLTPRFARSADKIFYVSYATKRRALVYEKDLKTGKESVVGDFSGISFAPRFSPDGRKAVMSIAKNGSTHIYEIDLATKRLHKLTDGFGINTSPSYSPDGKKIVYNSDRNGVPQLYIMNSDGSDVQRISFGGGSYTAPSWSPRGDYIAFTKIIRGAEGKTFNIGIMKAYPQDDENRERIITSGYLVESPCWSPNGRVIMFAKGWPSGAKAPGKNKIFAIDLTGHNEREIITPEDASDPEWSGVLN.

Residues 1-19 form the signal peptide; sequence MRNIIYFILLLLFSFKGYA.

It belongs to the TolB family. In terms of assembly, the Tol-Pal system is composed of five core proteins: the inner membrane proteins TolA, TolQ and TolR, the periplasmic protein TolB and the outer membrane protein Pal. They form a network linking the inner and outer membranes and the peptidoglycan layer.

The protein localises to the periplasm. Its function is as follows. Part of the Tol-Pal system, which plays a role in outer membrane invagination during cell division and is important for maintaining outer membrane integrity. The chain is Tol-Pal system protein TolB from Rickettsia akari (strain Hartford).